A 152-amino-acid chain; its full sequence is Small ribosomal subunit protein uS11A (152 aa).

A disordered region spans residues 131-152 (EDVTPIPSDSTRRKGGRRGRRL). Residues 143-152 (RKGGRRGRRL) are compositionally biased toward basic residues.

Belongs to the universal ribosomal protein uS11 family.

This is Small ribosomal subunit protein uS11A from Anopheles gambiae (African malaria mosquito).